A 575-amino-acid chain; its full sequence is Delta-1-pyrroline-5-carboxylate dehydrogenase, mitochondrial (575 aa).

Position 297–302 (297–302) interacts with NAD(+); that stretch reads GKIQSG. Glu-317 acts as the Proton acceptor in catalysis. The active-site Nucleophile is Cys-351.

It belongs to the aldehyde dehydrogenase family.

Its subcellular location is the mitochondrion inner membrane. It catalyses the reaction L-glutamate 5-semialdehyde + NAD(+) + H2O = L-glutamate + NADH + 2 H(+). The protein operates within amino-acid degradation; L-proline degradation into L-glutamate; L-glutamate from L-proline: step 2/2. In Saccharomyces cerevisiae (strain ATCC 204508 / S288c) (Baker's yeast), this protein is Delta-1-pyrroline-5-carboxylate dehydrogenase, mitochondrial (PUT2).